Reading from the N-terminus, the 521-residue chain is UDP-N-acetylmuramoyl-L-alanyl-D-glutamate--2,6-diaminopimelate ligase (521 aa).

A UDP-N-acetyl-alpha-D-muramoyl-L-alanyl-D-glutamate-binding site is contributed by serine 33. Residue 116-122 coordinates ATP; that stretch reads GTNGKTT. Residues 158–159, serine 185, glutamine 191, and arginine 193 each bind UDP-N-acetyl-alpha-D-muramoyl-L-alanyl-D-glutamate; that span reads TT. Lysine 225 carries the N6-carboxylysine modification. Residues arginine 409, 433-436, glycine 483, and glutamate 487 contribute to the meso-2,6-diaminopimelate site; that span reads DNPR. Residues 433-436 carry the Meso-diaminopimelate recognition motif motif; it reads DNPR.

This sequence belongs to the MurCDEF family. MurE subfamily. Mg(2+) is required as a cofactor. In terms of processing, carboxylation is probably crucial for Mg(2+) binding and, consequently, for the gamma-phosphate positioning of ATP.

The protein resides in the cytoplasm. It catalyses the reaction UDP-N-acetyl-alpha-D-muramoyl-L-alanyl-D-glutamate + meso-2,6-diaminopimelate + ATP = UDP-N-acetyl-alpha-D-muramoyl-L-alanyl-gamma-D-glutamyl-meso-2,6-diaminopimelate + ADP + phosphate + H(+). It functions in the pathway cell wall biogenesis; peptidoglycan biosynthesis. Catalyzes the addition of meso-diaminopimelic acid to the nucleotide precursor UDP-N-acetylmuramoyl-L-alanyl-D-glutamate (UMAG) in the biosynthesis of bacterial cell-wall peptidoglycan. This chain is UDP-N-acetylmuramoyl-L-alanyl-D-glutamate--2,6-diaminopimelate ligase, found in Nitrosomonas europaea (strain ATCC 19718 / CIP 103999 / KCTC 2705 / NBRC 14298).